The sequence spans 124 residues: Small ribosomal subunit protein bS6 (124 aa).

The interval 100-124 (KERRAARQKTGETQENVSQEESSTN) is disordered. A compositionally biased stretch (polar residues) spans 110-124 (GETQENVSQEESSTN).

Belongs to the bacterial ribosomal protein bS6 family.

In terms of biological role, binds together with bS18 to 16S ribosomal RNA. This chain is Small ribosomal subunit protein bS6, found in Fervidobacterium nodosum (strain ATCC 35602 / DSM 5306 / Rt17-B1).